The primary structure comprises 335 residues: MDARAREAAETSGPGLPLAVRELLAGGVAGGVAKTAVAPLERVKILFQTRRAEFHGSGLIGSFRTIYRTEGLLGFYRGNGASVARIVPYAALHYMAYEEYRRWIILGFPNVEQGPVLDLVAGSIAGGTAVICTYPLDLVRTKLAYQVKGAVSVGFRESKPSEQVYKGIMDCVKTIYRQNGLKGIYRGMAPSLYGIFPYSGLKFYFYEKMKSHVPEEHRKGIIAKLGCGSVAGLLGQTITYPLDVVRRQMQVQALSSSSLVGRGTFESLVMIAKQQGWRQLFSGLSINYLKVVPSVAIGFTVYDSMKVCLKVPSREETAVAVLAEERSNTAPIPSS.

The next 6 helical transmembrane spans lie at 12–32 (SGPG…AGGV), 75–95 (FYRG…LHYM), 119–139 (LVAG…LDLV), 187–207 (GMAP…YFYE), 225–242 (LGCG…TYPL), and 280–302 (LFSG…FTVY). Solcar repeat units follow at residues 17–103 (PLAV…YRRW), 113–212 (QGPV…MKSH), and 219–308 (KGII…MKVC).

It belongs to the mitochondrial carrier (TC 2.A.29) family. As to expression, expressed throughout the plant.

The protein resides in the mitochondrion inner membrane. Functionally, required for the accumulation of coenzyme A in the mitochondrial matrix. The sequence is that of Mitochondrial carrier protein CoAc2 from Zea mays (Maize).